We begin with the raw amino-acid sequence, 2169 residues long: Voltage-dependent L-type calcium channel subunit alpha-1C (2169 aa).

The Cytoplasmic segment spans residues 1–154 (MIRAFAQPST…RACISIVEWK (154 aa)). Residues 77–98 (GAALSWLAAIDAARQAKLMGSA) form a calmodulin-binding region. The disordered stretch occupies residues 104 to 128 (STVSSTQRKRQQYGKPKKQGGTTAT). Basic residues predominate over residues 110–121 (QRKRQQYGKPKK). One copy of the I repeat lies at 141–438 (NPIRRACISI…LVLGVLSGEF (298 aa)). The helical transmembrane segment at 155-173 (PFEIIILLTIFANCVALAI) threads the bilayer. Over 174–188 (YIPFPEDDSNATNSN) the chain is Extracellular. N-linked (GlcNAc...) asparagine glycosylation occurs at N183. A helical membrane pass occupies residues 189 to 209 (LERVEYLFLIIFTVEAFLKVI). Over 210-218 (AYGLLFHPN) the chain is Cytoplasmic. The helical transmembrane segment at 219–239 (AYLRNGWNLLDFIIVVVGLFS) threads the bilayer. Residues 240–262 (AILEQATKADGANALGGKGAGFD) are Extracellular-facing. A helical transmembrane segment spans residues 263–281 (VKALRAFRVLRPLRLVSGV). The Cytoplasmic segment spans residues 282–298 (PSLQVVLNSIIKAMVPL). Residues 299 to 320 (LHIALLVLFVIIIYAIIGLELF) traverse the membrane as a helical segment. Topologically, residues 321-380 (MGKMHKTCYNQEGIIDVPAEEDPSPCALETGHGRQCQNGTVCKPGWDGPKHGITNFDNFA) are extracellular. 2 disulfides stabilise this stretch: C328–C356 and C346–C362. N-linked (GlcNAc...) asparagine glycosylation occurs at N358. Positions 381–402 (FAMLTVFQCITMEGWTDVLYWM) form an intramembrane region, pore-forming. The Selectivity filter of repeat I signature appears at 391–394 (TMEG). E393 serves as a coordination point for Ca(2+). Residues 403–410 (QDAMGYEL) lie on the Extracellular side of the membrane. Residues 411 to 431 (PWVYFVSLVIFGSFFVLNLVL) form a helical membrane-spanning segment. Residues 432–554 (GVLSGEFSKE…RKCRAAVKSN (123 aa)) are Cytoplasmic-facing. The segment at 458–475 (QQLEEDLKGYLDWITQAE) is AID/alpha-interaction domain; mediates interaction with the beta subunit. The segment at 479 to 511 (PENEDEGMDEDKPRNMSMPTSETESVNTENVAG) is disordered. Over residues 495–508 (SMPTSETESVNTEN) the composition is skewed to polar residues. S499 bears the Phosphoserine mark. T506 is modified (phosphothreonine). The stretch at 540–786 (NRFCRRKCRA…LFLAIAVDNL (247 aa)) is one II repeat. A helical transmembrane segment spans residues 555–573 (VFYWLVIFLVFLNTLTIAS). Residues 574 to 584 (EHYNQPHWLTE) lie on the Extracellular side of the membrane. Residues 585–605 (VQDTANKALLALFTAEMLLKM) form a helical membrane-spanning segment. Topologically, residues 606 to 616 (YSLGLQAYFVS) are cytoplasmic. The chain crosses the membrane as a helical span at residues 617–636 (LFNRFDCFIVCGGILETILV). At 637–645 (ETKIMSPLG) the chain is on the extracellular side. A helical membrane pass occupies residues 646–664 (ISCWRCVRLLRIFKITRYW). Residues 665 to 683 (NSLSNLVASLLNSLRSIAS) lie on the Cytoplasmic side of the membrane. Residues 684–703 (LLLLLFLFIIIFSLLGMQLF) traverse the membrane as a helical segment. The Extracellular portion of the chain corresponds to 704-723 (GGKFNFDEMQTRRSTFDNFP). Residues 724–745 (QSLLTVFQILTGEDWNSVMYDG) constitute an intramembrane region (pore-forming). The Selectivity filter of repeat II motif lies at 734-737 (TGED). E736 serves as a coordination point for Ca(2+). Topologically, residues 746 to 755 (IMAYGGPSFP) are extracellular. Residues 756-775 (GMLVCIYFIILFISPNYILL) form a helical membrane-spanning segment. Residues 776 to 930 (NLFLAIAVDN…LQCHRIVNDT (155 aa)) are Cytoplasmic-facing. Residues 794 to 891 (SAQKEEEEEK…EMPVGPRPRP (98 aa)) are disordered. A compositionally biased stretch (basic and acidic residues) spans 813–836 (SPEKKQEVMEKPAVEESKEEKIEL). 2 positions are modified to phosphoserine: S838 and S845. The interval 859 to 906 (SENEDKSPHSNPDTAGEEDEEEPEMPVGPRPRPLSELHLKEKAVPMPE) is interaction with STAC2. The span at 873 to 882 (AGEEDEEEPE) shows a compositional bias: acidic residues. Residues 917–1198 (NRFRLQCHRI…IFVGFVIVTF (282 aa)) form an III repeat. A helical transmembrane segment spans residues 931 to 949 (IFTNLILFFILLSSISLAA). Residues 950–961 (EDPVQHTSFRNH) lie on the Extracellular side of the membrane. Residues 962-981 (ILFYFDIVFTTIFTIEIALK) form a helical membrane-spanning segment. Topologically, residues 982-997 (MTAYGAFLHKGSFCRN) are cytoplasmic. A helical membrane pass occupies residues 998 to 1016 (YFNILDLLVVSVSLISFGI). The Extracellular portion of the chain corresponds to 1017 to 1023 (QSSAINV). Residues 1024–1041 (VKILRVLRVLRPLRINRA) form a helical membrane-spanning segment. Residues 1042 to 1060 (KGLKHVVQCVFVAIRTIGN) are Cytoplasmic-facing. The chain crosses the membrane as a helical span at residues 1061-1080 (IVIVTTLLQFMFACIGVQLF). Residues 1081–1130 (KGKLYTCSDSSKQTEAESKGNYITYKTGEVDHPIIQPRSWENSKFDFDNV) are Extracellular-facing. A dihydropyridine binding region spans residues 1118–1207 (RSWENSKFDF…FQEQGEQEYK (90 aa)). The segment at residues 1131-1151 (LAAMMALFTVSTFEGWPELLY) is an intramembrane region (pore-forming). The Selectivity filter of repeat III motif lies at 1142–1145 (TFEG). Residue E1144 coordinates Ca(2+). Topologically, residues 1152–1168 (RSIDSHTEDKGPIYNYR) are extracellular. The helical transmembrane segment at 1169–1190 (VEISIFFIIYIIIIAFFMMNIF) threads the bilayer. Residues 1191 to 1248 (VGFVIVTFQEQGEQEYKNCELDKNQRQCVEYALKARPLPRYIPKNQHQYKVWYVVNST) lie on the Cytoplasmic side of the membrane. One copy of the IV repeat lies at 1235-1508 (NQHQYKVWYV…LFVAVIMDNF (274 aa)). A helical membrane pass occupies residues 1249–1270 (YFEYLMFVLILLNTICLAMQHY). Topologically, residues 1271–1278 (GQSCLFKI) are extracellular. The helical transmembrane segment at 1279–1300 (AMNILNMLFTGLFTVEMILKLI) threads the bilayer. Residues 1301 to 1310 (AFKPKHYFCD) are Cytoplasmic-facing. The helical transmembrane segment at 1311–1330 (AWNTFDALIVVGSIVDIAIT) threads the bilayer. Topologically, residues 1331-1353 (EVHPAEHTQCSPSMSAEENSRIS) are extracellular. Residues 1354–1372 (ITFFRLFRVMRLVKLLSRG) form a helical membrane-spanning segment. The Cytoplasmic portion of the chain corresponds to 1373 to 1390 (EGIRTLLWTFIKSFQALP). Residues 1391–1411 (YVALLIVMLFFIYAVIGMQVF) traverse the membrane as a helical segment. Over 1412-1433 (GKIALNDTTEINRNNNFQTFPQ) the chain is Extracellular. N-linked (GlcNAc...) asparagine glycosylation is present at N1417. Residues 1434 to 1452 (AVLLLFRCATGEAWQDIML) constitute an intramembrane region (pore-forming). Positions 1443–1446 (TGEA) match the Selectivity filter of repeat IV motif. Over 1453 to 1480 (ACMPGKKCAPESEPSNSTEGETPCGSSF) the chain is Extracellular. The interval 1459–1527 (KCAPESEPSN…LGPHHLDEFK (69 aa)) is dihydropyridine binding. Residues C1460 and C1476 are joined by a disulfide bond. An N-linked (GlcNAc...) asparagine glycan is attached at N1468. The phenylalkylamine binding stretch occupies residues 1473–1515 (ETPCGSSFAVFYFISFYMLCAFLIINLFVAVIMDNFDYLTRDW). A helical transmembrane segment spans residues 1481–1505 (AVFYFISFYMLCAFLIINLFVAVIM). The Cytoplasmic segment spans residues 1506-2169 (DNFDYLTRDW…PDSRSYVSNL (664 aa)). The interval 1640 to 1667 (DEVTVGKFYATFLIQEYFRKFKKRKEQG) is important for interaction with STAC1, STAC2 and STAC3. Positions 1640-1673 (DEVTVGKFYATFLIQEYFRKFKKRKEQGLVGKPS) are calmodulin-binding. The interval 1646–1666 (KFYATFLIQEYFRKFKKRKEQ) is calmodulin-binding IQ region. An important for localization in at the junctional membrane region spans residues 1680 to 1699 (LQAGLRTLHDIGPEIRRAIS). Phosphoserine is present on residues S1699 and S1720. Composition is skewed to polar residues over residues 1761 to 1770 (KTGNNQADTE) and 1780 to 1792 (STFT…STGS). The interval 1761–1793 (KTGNNQADTESPSHEKLVDSTFTPSSYSSTGSN) is disordered. S1927 is subject to Phosphoserine; by PKA. The tract at residues 1970-1998 (RSHSPSTFPRPRPTPPVTPGSRGRPLQPI) is disordered. Residues 1977–1987 (FPRPRPTPPVT) show a composition bias toward pro residues.

The protein belongs to the calcium channel alpha-1 subunit (TC 1.A.1.11) family. CACNA1C subfamily. In terms of assembly, component of a calcium channel complex consisting of a pore-forming alpha subunit (CACNA1C) and ancillary beta, gamma and delta subunits. The channel complex contains alpha, beta, gamma and delta subunits in a 1:1:1:1 ratio, i.e. it contains only one of each type of subunit. CACNA1C channel activity is modulated by ancillary subunits, such as CACNB1, CACNB2, CACNB3, CACNA2D1 and CACNA2D4. Interacts with the gamma subunits CACNG4, CACNG6, CACNG7 and CACNG8. Interacts with CACNB1. Interacts with CACNB2. Identified in a complex with CACNA2D4 and CACNB3. Interacts with CACNB3. Interacts with CACNA2D1. Interacts with CACNA2D4. Interacts with CALM1. Interacts (via the N-terminus and the C-terminal C and IQ motifs) with CABP1; this inhibits Ca(2+)-dependent channel inactivation. The binding via the C motif is calcium independent whereas the binding via IQ requires the presence of calcium and is mutually exclusive with calmodulin binding. The binding to the cytoplasmic N-terminal domain is calcium independent but is essential for the channel modulation. Interacts (via C-terminal CDB motif) with CABP5; in a calcium-dependent manner. Interacts with CIB1; the interaction increases upon cardiomyocytes hypertrophy. Interacts with STAC2 and STAC3; this inhibits channel inactivation. Phosphorylation by PKA at Ser-1927 activates the channel. Elevated levels of blood glucose lead to increased phosphorylation by PKA. Is also phosphorylated in vitro by CaM-kinase II, PKC and CGPK. As to expression, detected in hippocampus and brain cortex, on neuronal cell bodies and dendrites, and in post-synaptic density in brain (at protein level). Isoforms 4 and 5 are expressed throughout the central nervous system, with highest levels in the olfactory bulb and cerebellum. Also expressed in heart, pituitary, adrenal gland, liver, kidney, and in a much lesser extent in testes and spleen.

It is found in the cell membrane. Its subcellular location is the sarcolemma. The protein localises to the perikaryon. It localises to the postsynaptic density membrane. The protein resides in the cell projection. It is found in the dendrite. Its subcellular location is the T-tubule. It carries out the reaction Ca(2+)(in) = Ca(2+)(out). Inhibited by dihydropyridines (DHP), such as isradipine. Inhibited by nifedipine. Channel activity is regulated by Ca(2+) and calmodulin. Binding of STAC1, STAC2 or STAC3 to a region that overlaps with the calmodulin binding site inhibits channel inactivation by Ca(2+) and calmodulin. Binding of calmodulin or CABP1 at the same regulatory sites results in opposite effects on the channel function. Shear stress and pressure increases calcium channel activity. Pore-forming, alpha-1C subunit of the voltage-gated calcium channel that gives rise to L-type calcium currents. Mediates influx of calcium ions into the cytoplasm, and thereby triggers calcium release from the sarcoplasm. Plays an important role in excitation-contraction coupling in the heart. Required for normal heart development and normal regulation of heart rhythm. Required for normal contraction of smooth muscle cells in blood vessels and in the intestine. Essential for normal blood pressure regulation via its role in the contraction of arterial smooth muscle cells. Long-lasting (L-type) calcium channels belong to the 'high-voltage activated' (HVA) group. This chain is Voltage-dependent L-type calcium channel subunit alpha-1C (Cacna1c), found in Rattus norvegicus (Rat).